Here is a 549-residue protein sequence, read N- to C-terminus: Glucose-6-phosphate isomerase (549 aa).

Catalysis depends on glutamate 353, which acts as the Proton donor. Catalysis depends on residues histidine 384 and lysine 513.

The protein belongs to the GPI family.

The protein localises to the cytoplasm. The enzyme catalyses alpha-D-glucose 6-phosphate = beta-D-fructose 6-phosphate. It participates in carbohydrate biosynthesis; gluconeogenesis. It functions in the pathway carbohydrate degradation; glycolysis; D-glyceraldehyde 3-phosphate and glycerone phosphate from D-glucose: step 2/4. Its function is as follows. Catalyzes the reversible isomerization of glucose-6-phosphate to fructose-6-phosphate. This Brucella suis (strain ATCC 23445 / NCTC 10510) protein is Glucose-6-phosphate isomerase.